We begin with the raw amino-acid sequence, 348 residues long: Histidinol-phosphate aminotransferase (348 aa).

Lysine 207 carries the post-translational modification N6-(pyridoxal phosphate)lysine.

Belongs to the class-II pyridoxal-phosphate-dependent aminotransferase family. Histidinol-phosphate aminotransferase subfamily. Homodimer. It depends on pyridoxal 5'-phosphate as a cofactor.

The catalysed reaction is L-histidinol phosphate + 2-oxoglutarate = 3-(imidazol-4-yl)-2-oxopropyl phosphate + L-glutamate. The protein operates within amino-acid biosynthesis; L-histidine biosynthesis; L-histidine from 5-phospho-alpha-D-ribose 1-diphosphate: step 7/9. The chain is Histidinol-phosphate aminotransferase from Crocosphaera subtropica (strain ATCC 51142 / BH68) (Cyanothece sp. (strain ATCC 51142)).